The sequence spans 103 residues: Large ribosomal subunit protein bL21 (103 aa).

This sequence belongs to the bacterial ribosomal protein bL21 family. In terms of assembly, part of the 50S ribosomal subunit. Contacts protein L20.

This protein binds to 23S rRNA in the presence of protein L20. This Herminiimonas arsenicoxydans protein is Large ribosomal subunit protein bL21.